We begin with the raw amino-acid sequence, 107 residues long: Ig kappa chain V-VI region XRPC 24 (107 aa).

Residues 1–23 form a framework-1 region; that stretch reads EIVLTQSPAITAASLGQKVTITC. Cysteine 23 and cysteine 87 are disulfide-bonded. The tract at residues 24–33 is complementarity-determining-1; sequence SASSSVSYMH. Residues 34-48 are framework-2; the sequence is WYQQKSGTSPKPWIY. Positions 49–55 are complementarity-determining-2; sequence EISKLAS. The segment at 56–87 is framework-3; that stretch reads GVPARFSGSGSGTSYSLTISSMEAEDAAIYYC. Positions 88–96 are complementarity-determining-3; the sequence is QQWNYPLIT. The tract at residues 97-106 is framework-4; sequence FGSGTKLEIK.

In Mus musculus (Mouse), this protein is Ig kappa chain V-VI region XRPC 24.